Reading from the N-terminus, the 237-residue chain is Phosphoribosylaminoimidazole-succinocarboxamide synthase (237 aa).

Belongs to the SAICAR synthetase family.

It carries out the reaction 5-amino-1-(5-phospho-D-ribosyl)imidazole-4-carboxylate + L-aspartate + ATP = (2S)-2-[5-amino-1-(5-phospho-beta-D-ribosyl)imidazole-4-carboxamido]succinate + ADP + phosphate + 2 H(+). Its pathway is purine metabolism; IMP biosynthesis via de novo pathway; 5-amino-1-(5-phospho-D-ribosyl)imidazole-4-carboxamide from 5-amino-1-(5-phospho-D-ribosyl)imidazole-4-carboxylate: step 1/2. The chain is Phosphoribosylaminoimidazole-succinocarboxamide synthase from Photorhabdus laumondii subsp. laumondii (strain DSM 15139 / CIP 105565 / TT01) (Photorhabdus luminescens subsp. laumondii).